We begin with the raw amino-acid sequence, 139 residues long: 6,7-dimethyl-8-ribityllumazine synthase (139 aa).

5-amino-6-(D-ribitylamino)uracil contacts are provided by residues phenylalanine 11, 42–44, and 66–68; these read ALE and VVI. 71–72 lines the (2S)-2-hydroxy-3-oxobutyl phosphate pocket; it reads ET. Histidine 74 acts as the Proton donor in catalysis. Asparagine 98 contributes to the 5-amino-6-(D-ribitylamino)uracil binding site. (2S)-2-hydroxy-3-oxobutyl phosphate is bound at residue arginine 112.

Belongs to the DMRL synthase family.

The enzyme catalyses (2S)-2-hydroxy-3-oxobutyl phosphate + 5-amino-6-(D-ribitylamino)uracil = 6,7-dimethyl-8-(1-D-ribityl)lumazine + phosphate + 2 H2O + H(+). It participates in cofactor biosynthesis; riboflavin biosynthesis; riboflavin from 2-hydroxy-3-oxobutyl phosphate and 5-amino-6-(D-ribitylamino)uracil: step 1/2. In terms of biological role, catalyzes the formation of 6,7-dimethyl-8-ribityllumazine by condensation of 5-amino-6-(D-ribitylamino)uracil with 3,4-dihydroxy-2-butanone 4-phosphate. This is the penultimate step in the biosynthesis of riboflavin. The sequence is that of 6,7-dimethyl-8-ribityllumazine synthase from Zymomonas mobilis subsp. mobilis (strain ATCC 31821 / ZM4 / CP4).